Here is an 88-residue protein sequence, read N- to C-terminus: Small ribosomal subunit protein bS16c (88 aa).

Component of the chloroplast small ribosomal subunit (SSU). Mature 70S chloroplast ribosomes of higher plants consist of a small (30S) and a large (50S) subunit. The 30S small subunit contains 1 molecule of ribosomal RNA (16S rRNA) and 24 different proteins. The 50S large subunit contains 3 rRNA molecules (23S, 5S and 4.5S rRNA) and 33 different proteins.

The protein resides in the plastid. Its subcellular location is the chloroplast. Component of the chloroplast ribosome (chloro-ribosome), a dedicated translation machinery responsible for the synthesis of chloroplast genome-encoded proteins, including proteins of the transcription and translation machinery and components of the photosynthetic apparatus. The chain is Small ribosomal subunit protein bS16c from Spinacia oleracea (Spinach).